The chain runs to 791 residues: AP-1 complex subunit gamma-like 2 (791 aa).

The 116-residue stretch at 671–786 (APIPSVRVFE…QEIFEVDNLP (116 aa)) folds into the GAE domain.

The protein belongs to the adaptor complexes large subunit family. May interact with AP1S1/Sigma1A-adaptin and AP1S2/Sigma1B-adaptin. Probably does not interact with APB1. Interacts (via GAE domain) with RABEP1, NECAP1, CLINT1 and AFTPH/aftiphilin. Interacts with HBV major surface antigen L. Interacts with HBV core protein C in a ubiquitin-dependent manner. Binds ubiquitin. As to expression, widely expressed.

The protein resides in the golgi apparatus membrane. The protein localises to the cytoplasmic vesicle membrane. Its subcellular location is the endosome membrane. May function in protein sorting in late endosomes or multivesucular bodies (MVBs). Involved in MVB-assisted maturation of hepatitis B virus (HBV). This chain is AP-1 complex subunit gamma-like 2 (Ap1g2), found in Mus musculus (Mouse).